Consider the following 633-residue polypeptide: Phosphomethylpyrimidine synthase (633 aa).

Over residues 1 to 13 the composition is skewed to polar residues; it reads MNIRSNPDTTLPA. The segment at 1-22 is disordered; it reads MNIRSNPDTTLPAVTTGPLPSS. Residues Asn221, Met250, Tyr279, His315, 335–337, 376–379, and Glu415 each bind substrate; these read SRG and DGLR. His419 contacts Zn(2+). Position 442 (Tyr442) interacts with substrate. Position 483 (His483) interacts with Zn(2+). The [4Fe-4S] cluster site is built by Cys563, Cys566, and Cys571.

The protein belongs to the ThiC family. Homodimer. Requires [4Fe-4S] cluster as cofactor.

It catalyses the reaction 5-amino-1-(5-phospho-beta-D-ribosyl)imidazole + S-adenosyl-L-methionine = 4-amino-2-methyl-5-(phosphooxymethyl)pyrimidine + CO + 5'-deoxyadenosine + formate + L-methionine + 3 H(+). The protein operates within cofactor biosynthesis; thiamine diphosphate biosynthesis. In terms of biological role, catalyzes the synthesis of the hydroxymethylpyrimidine phosphate (HMP-P) moiety of thiamine from aminoimidazole ribotide (AIR) in a radical S-adenosyl-L-methionine (SAM)-dependent reaction. The chain is Phosphomethylpyrimidine synthase from Bradyrhizobium sp. (strain BTAi1 / ATCC BAA-1182).